The following is a 372-amino-acid chain: Solute carrier family 35 member F6 (372 aa).

The N-terminal stretch at 1–18 (MAWTKYQLFLAGLMLVTG) is a signal peptide. The next 2 membrane-spanning stretches (helical) occupy residues 48–68 (FVQAVGMFLGEFSCLAAFYLL) and 89–109 (LLFLPPALCDMTGTSIMYVAL). The region spanning 105–160 (MYVALNMTSASSFQMLRGAVIIFTGLFSVAFLDRRLAPSQWLGILITIAGLVVVGL) is the EamA domain. Asn110 is a glycosylation site (N-linked (GlcNAc...) asparagine). Transmembrane regions (helical) follow at residues 116–136 (SFQMLRGAVIIFTGLFSVAFL), 145–165 (WLGILITIAGLVVVGLADLLS), 176–196 (VITGDLLIIMAQIIIAIQMVL), 211–231 (AVGIEGFFGFVILSLLLVPMF), 261–281 (LIALALLGNISSIAFFNFSGI), 293–312 (MVLDTLRTIVIWAFTLALGW), and 320–336 (ILGFLILLMGTALYNGL). A Phosphothreonine modification is found at Thr366.

Belongs to the SLC35F solute transporter family. As to quaternary structure, interacts with SLC25A5.

It localises to the mitochondrion. Its subcellular location is the lysosome membrane. In terms of biological role, involved in the maintenance of mitochondrial membrane potential in pancreatic ductal adenocarcinoma (PDAC) cells. Promotes pancreatic ductal adenocarcinoma (PDAC) cell growth. May play a role as a nucleotide-sugar transporter. The polypeptide is Solute carrier family 35 member F6 (Slc35f6) (Mus musculus (Mouse)).